The following is a 355-amino-acid chain: Uroporphyrinogen decarboxylase (355 aa).

Substrate-binding positions include 27 to 31 (RQAGR), D77, Y154, T209, and H328.

The protein belongs to the uroporphyrinogen decarboxylase family. Homodimer.

The protein resides in the cytoplasm. The catalysed reaction is uroporphyrinogen III + 4 H(+) = coproporphyrinogen III + 4 CO2. Its pathway is porphyrin-containing compound metabolism; protoporphyrin-IX biosynthesis; coproporphyrinogen-III from 5-aminolevulinate: step 4/4. Catalyzes the decarboxylation of four acetate groups of uroporphyrinogen-III to yield coproporphyrinogen-III. The protein is Uroporphyrinogen decarboxylase of Aliivibrio fischeri (strain ATCC 700601 / ES114) (Vibrio fischeri).